A 516-amino-acid chain; its full sequence is Bifunctional pantoate ligase/cytidylate kinase (516 aa).

Positions 1 to 279 (MVRKIFQTNA…CGSTRLIDHT (279 aa)) are pantoate--beta-alanine ligase. 29–36 (MGGLHPGH) is a binding site for ATP. Residue H36 is the Proton donor of the active site. Position 64 (Q64) interacts with (R)-pantoate. Q64 contributes to the beta-alanine binding site. 153-156 (GEKD) contacts ATP. Q159 serves as a coordination point for (R)-pantoate. Position 190–193 (190–193 (YSSR)) interacts with ATP. Residues 280-516 (FLMHRKPIIA…PEEVWPTPNS (237 aa)) are cytidylate kinase.

It in the N-terminal section; belongs to the pantothenate synthetase family. This sequence in the C-terminal section; belongs to the cytidylate kinase family. Type 1 subfamily.

It localises to the cytoplasm. The enzyme catalyses (R)-pantoate + beta-alanine + ATP = (R)-pantothenate + AMP + diphosphate + H(+). It carries out the reaction CMP + ATP = CDP + ADP. The catalysed reaction is dCMP + ATP = dCDP + ADP. The protein operates within cofactor biosynthesis; (R)-pantothenate biosynthesis; (R)-pantothenate from (R)-pantoate and beta-alanine: step 1/1. Its function is as follows. Catalyzes the condensation of pantoate with beta-alanine in an ATP-dependent reaction via a pantoyl-adenylate intermediate. Functionally, catalyzes the transfer of a phosphate group from ATP to either CMP or dCMP to form CDP or dCDP and ADP, respectively. The chain is Bifunctional pantoate ligase/cytidylate kinase from Prochlorococcus marinus (strain NATL2A).